Here is a 30-residue protein sequence, read N- to C-terminus: Cysteine-rich venom protein okinavin (30 aa).

Positions 1-30 (SVDFDSESPRKPXIQNEIVDLHNPLRRXVN) are disordered.

The protein belongs to the CRISP family. In terms of processing, contains 8 disulfide bonds. Expressed by the venom gland.

Its subcellular location is the secreted. In terms of biological role, inhibits calcium-activated potassium channels (KCa), voltage-gated potassium channel (Kv), and the calcium release channel/ryanodine receptor (RyR). The chain is Cysteine-rich venom protein okinavin from Ovophis okinavensis (Ryukyu Island pit viper).